The following is a 154-amino-acid chain: Large ribosomal subunit protein uL13 (154 aa).

Belongs to the universal ribosomal protein uL13 family. As to quaternary structure, part of the 50S ribosomal subunit.

Its function is as follows. This protein is one of the early assembly proteins of the 50S ribosomal subunit, although it is not seen to bind rRNA by itself. It is important during the early stages of 50S assembly. This Agrobacterium fabrum (strain C58 / ATCC 33970) (Agrobacterium tumefaciens (strain C58)) protein is Large ribosomal subunit protein uL13.